The primary structure comprises 402 residues: 4-hydroxy-3-methylbut-2-enyl diphosphate reductase (402 aa).

Residue Cys-66 participates in [4Fe-4S] cluster binding. (2E)-4-hydroxy-3-methylbut-2-enyl diphosphate is bound at residue His-96. Residue His-96 coordinates dimethylallyl diphosphate. An isopentenyl diphosphate-binding site is contributed by His-96. Cys-157 contributes to the [4Fe-4S] cluster binding site. His-185 contributes to the (2E)-4-hydroxy-3-methylbut-2-enyl diphosphate binding site. His-185 serves as a coordination point for dimethylallyl diphosphate. His-185 is a binding site for isopentenyl diphosphate. Glu-187 functions as the Proton donor in the catalytic mechanism. Thr-250 is a (2E)-4-hydroxy-3-methylbut-2-enyl diphosphate binding site. Cys-288 is a [4Fe-4S] cluster binding site. (2E)-4-hydroxy-3-methylbut-2-enyl diphosphate is bound by residues Ser-317, Ser-318, Asn-319, and Ser-379. Dimethylallyl diphosphate-binding residues include Ser-317, Ser-318, Asn-319, and Ser-379. Residues Ser-317, Ser-318, Asn-319, and Ser-379 each contribute to the isopentenyl diphosphate site.

Belongs to the IspH family. [4Fe-4S] cluster is required as a cofactor.

It carries out the reaction isopentenyl diphosphate + 2 oxidized [2Fe-2S]-[ferredoxin] + H2O = (2E)-4-hydroxy-3-methylbut-2-enyl diphosphate + 2 reduced [2Fe-2S]-[ferredoxin] + 2 H(+). The enzyme catalyses dimethylallyl diphosphate + 2 oxidized [2Fe-2S]-[ferredoxin] + H2O = (2E)-4-hydroxy-3-methylbut-2-enyl diphosphate + 2 reduced [2Fe-2S]-[ferredoxin] + 2 H(+). Its pathway is isoprenoid biosynthesis; dimethylallyl diphosphate biosynthesis; dimethylallyl diphosphate from (2E)-4-hydroxy-3-methylbutenyl diphosphate: step 1/1. It functions in the pathway isoprenoid biosynthesis; isopentenyl diphosphate biosynthesis via DXP pathway; isopentenyl diphosphate from 1-deoxy-D-xylulose 5-phosphate: step 6/6. In terms of biological role, catalyzes the conversion of 1-hydroxy-2-methyl-2-(E)-butenyl 4-diphosphate (HMBPP) into a mixture of isopentenyl diphosphate (IPP) and dimethylallyl diphosphate (DMAPP). Acts in the terminal step of the DOXP/MEP pathway for isoprenoid precursor biosynthesis. This is 4-hydroxy-3-methylbut-2-enyl diphosphate reductase from Microcystis aeruginosa (strain NIES-843 / IAM M-2473).